Consider the following 62-residue polypeptide: Large ribosomal subunit protein bL35 (62 aa).

Residues 1-26 (MPKMKTKSGLKKRIKITATGKVKRGN) are compositionally biased toward basic residues. A disordered region spans residues 1–62 (MPKMKTKSGL…SDFKRYKELI (62 aa)). Residues 53–62 (SDFKRYKELI) show a composition bias toward basic and acidic residues.

The protein belongs to the bacterial ribosomal protein bL35 family.

In Metamycoplasma arthritidis (strain 158L3-1) (Mycoplasma arthritidis), this protein is Large ribosomal subunit protein bL35.